The chain runs to 276 residues: Undecaprenyl-diphosphatase (276 aa).

Transmembrane regions (helical) follow at residues 1 to 21 (MSWL…FLPV), 39 to 59 (AGAS…LVYF), 84 to 104 (YWLG…GLLF), 115 to 135 (LWLV…AEYA), 159 to 179 (LALV…LFLG), 190 to 210 (FLLA…DAFA), 222 to 242 (QLLV…AWFL), and 253 to 273 (FVGY…TGVV).

Belongs to the UppP family.

The protein localises to the cell membrane. It carries out the reaction di-trans,octa-cis-undecaprenyl diphosphate + H2O = di-trans,octa-cis-undecaprenyl phosphate + phosphate + H(+). Functionally, catalyzes the dephosphorylation of undecaprenyl diphosphate (UPP). Confers resistance to bacitracin. In Mycolicibacterium gilvum (strain PYR-GCK) (Mycobacterium gilvum (strain PYR-GCK)), this protein is Undecaprenyl-diphosphatase.